A 98-amino-acid chain; its full sequence is Large ribosomal subunit protein uL23 (98 aa).

The protein belongs to the universal ribosomal protein uL23 family. In terms of assembly, part of the 50S ribosomal subunit. Contacts protein L29, and trigger factor when it is bound to the ribosome.

Functionally, one of the early assembly proteins it binds 23S rRNA. One of the proteins that surrounds the polypeptide exit tunnel on the outside of the ribosome. Forms the main docking site for trigger factor binding to the ribosome. In Methylorubrum populi (strain ATCC BAA-705 / NCIMB 13946 / BJ001) (Methylobacterium populi), this protein is Large ribosomal subunit protein uL23.